The sequence spans 295 residues: Probable endonuclease 4 (295 aa).

Zn(2+)-binding residues include histidine 78, histidine 118, glutamate 154, aspartate 188, histidine 191, histidine 225, aspartate 238, histidine 240, and glutamate 270.

It belongs to the AP endonuclease 2 family. It depends on Zn(2+) as a cofactor.

It carries out the reaction Endonucleolytic cleavage to 5'-phosphooligonucleotide end-products.. Its function is as follows. Endonuclease IV plays a role in DNA repair. It cleaves phosphodiester bonds at apurinic or apyrimidinic (AP) sites, generating a 3'-hydroxyl group and a 5'-terminal sugar phosphate. This Vibrio campbellii (strain ATCC BAA-1116) protein is Probable endonuclease 4.